A 257-amino-acid polypeptide reads, in one-letter code: 5'-nucleotidase SurE (257 aa).

4 residues coordinate a divalent metal cation: Asp8, Asp9, Ser40, and Asn95.

The protein belongs to the SurE nucleotidase family. It depends on a divalent metal cation as a cofactor.

The protein resides in the cytoplasm. It catalyses the reaction a ribonucleoside 5'-phosphate + H2O = a ribonucleoside + phosphate. Functionally, nucleotidase that shows phosphatase activity on nucleoside 5'-monophosphates. This is 5'-nucleotidase SurE from Desulfovibrio desulfuricans (strain ATCC 27774 / DSM 6949 / MB).